The primary structure comprises 262 residues: Flap endonuclease Xni (262 aa).

Mg(2+) is bound at residue aspartate 105. Residues glutamate 162 to lysine 257 form the 5'-3' exonuclease domain. Leucine 172, alanine 173, proline 181, isoleucine 183, and isoleucine 186 together coordinate K(+). The tract at residues glycine 185–serine 190 is interaction with DNA.

Belongs to the Xni family. The cofactor is Mg(2+). Requires K(+) as cofactor.

Its function is as follows. Has flap endonuclease activity. During DNA replication, flap endonucleases cleave the 5'-overhanging flap structure that is generated by displacement synthesis when DNA polymerase encounters the 5'-end of a downstream Okazaki fragment. This chain is Flap endonuclease Xni, found in Shewanella baltica (strain OS155 / ATCC BAA-1091).